The following is a 696-amino-acid chain: Lutropin-choriogonadotropic hormone receptor (696 aa).

The N-terminal stretch at 1-27 is a signal peptide; sequence MRRRSLALRLLLALLLLPPPLPQTLLG. Residues 28–358 are Extracellular-facing; that stretch reads APCPEPCSCR…AFNPCEDIMG (331 aa). A glycan (N-linked (GlcNAc...) asparagine) is linked at Asn99. LRR repeat units lie at residues 122-147, 149-171, 172-196, 198-220, 221-244, and 250-271; these read LPRL…IFSS, FNFI…AFQG, MNNE…AFNG, TLIS…AFRG, ARGP…GLES, and ATSS…LLDA. N-linked (GlcNAc...) asparagine glycans are attached at residues Asn174 and Asn195. N-linked (GlcNAc...) asparagine glycosylation is found at Asn291, Asn299, and Asn313. Tyr331 is modified (sulfotyrosine). A helical membrane pass occupies residues 359–386; it reads YDFLRVLIWLINILAIMGNVTVLFVLLT. Topologically, residues 387–395 are cytoplasmic; it reads SHYKLTVPR. The helical transmembrane segment at 396–418 threads the bilayer; the sequence is FLMCNLSFADFCMGLYLLLIASV. The Extracellular segment spans residues 419 to 439; it reads DAQTKGQYYNHAIDWQTGNGC. Cys439 and Cys514 are oxidised to a cystine. The helical transmembrane segment at 440 to 462 threads the bilayer; that stretch reads SVAGFFTVFASELSVYTLTVITL. The Cytoplasmic segment spans residues 463–482; that stretch reads ERWHTITYAIQLDQKLRLRH. The helical transmembrane segment at 483 to 505 threads the bilayer; the sequence is AIPIMLGGWLFSTLIAMLPLVGV. The Extracellular segment spans residues 506–525; that stretch reads SSYMKVSICLPMDVETTLSQ. The chain crosses the membrane as a helical span at residues 526 to 547; sequence VYILTILILNVVAFIIICACYI. Over 548–570 the chain is Cytoplasmic; that stretch reads KIYFAVQNPELMATNKDTKIAKK. A helical transmembrane segment spans residues 571-594; it reads MAVLIFTDFTCMAPISFFAISAAL. The Extracellular segment spans residues 595-605; that stretch reads KVPLITVTNSK. Residues 606-626 traverse the membrane as a helical segment; that stretch reads VLLVLFYPVNSCANPFLYAIF. The Cytoplasmic segment spans residues 627-696; that stretch reads TKAFRRDFFL…VMDKTCYKDC (70 aa). 2 S-palmitoyl cysteine lipidation sites follow: Cys643 and Cys644.

It belongs to the G-protein coupled receptor 1 family. FSH/LSH/TSH subfamily. Post-translationally, sulfated.

Its subcellular location is the cell membrane. Functionally, receptor for lutropin-choriogonadotropic hormone. The activity of this receptor is mediated by G proteins which activate adenylate cyclase. This is Lutropin-choriogonadotropic hormone receptor (LHCGR) from Sus scrofa (Pig).